Consider the following 140-residue polypeptide: Protein PsiE homolog (140 aa).

4 consecutive transmembrane segments (helical) span residues 16 to 36 (IVLQYILNVALICLGVVLSVF), 57 to 77 (YHLIDSIVVFFLYFEFIVMII), 85 to 105 (HFPLRYFIYIGITAIVRLIII), and 110 to 130 (PLDLLLYACAIFVLISALFIA).

This sequence belongs to the PsiE family.

Its subcellular location is the cell membrane. This chain is Protein PsiE homolog, found in Bacillus cereus (strain ATCC 14579 / DSM 31 / CCUG 7414 / JCM 2152 / NBRC 15305 / NCIMB 9373 / NCTC 2599 / NRRL B-3711).